Here is a 363-residue protein sequence, read N- to C-terminus: MSNKKRIFFTGGGTGGHVFPGISIIQKLKELDNEIEFFWIGKKNSIEEKLIKEQNNIKFIWVPCGKLRRYFSFQNFTDFFKVILGIIKSFYVLKKYKPQIVYATGGFVSTPTIIASSLLKIKRITHEMDLDPGLATKINSKFANKIYTSFKESEKYFKNHKNIIYTGSPIRKEFLTPNPKIIKQLTQNTNKPIVSVLGGSLGANALNNLALFIKKYAEIYFIHQSGKNLNDLREDNYLRRQFFNAEEMASIEKFSNIIISRAGAGAIKEFANACTCVILIPFKKGSRGDQIKNAKLLKNQNACIYIDEDEILNTNILKVIKETLNDREKINSLKENIKKFNNKHSSTLIAKLLIEDIKETKSK.

UDP-N-acetyl-alpha-D-glucosamine contacts are provided by residues 14–16 (TGG), arginine 171, serine 200, and glutamine 290.

It belongs to the glycosyltransferase 28 family. MurG subfamily.

The protein resides in the cell inner membrane. The catalysed reaction is di-trans,octa-cis-undecaprenyl diphospho-N-acetyl-alpha-D-muramoyl-L-alanyl-D-glutamyl-meso-2,6-diaminopimeloyl-D-alanyl-D-alanine + UDP-N-acetyl-alpha-D-glucosamine = di-trans,octa-cis-undecaprenyl diphospho-[N-acetyl-alpha-D-glucosaminyl-(1-&gt;4)]-N-acetyl-alpha-D-muramoyl-L-alanyl-D-glutamyl-meso-2,6-diaminopimeloyl-D-alanyl-D-alanine + UDP + H(+). It functions in the pathway cell wall biogenesis; peptidoglycan biosynthesis. Cell wall formation. Catalyzes the transfer of a GlcNAc subunit on undecaprenyl-pyrophosphoryl-MurNAc-pentapeptide (lipid intermediate I) to form undecaprenyl-pyrophosphoryl-MurNAc-(pentapeptide)GlcNAc (lipid intermediate II). The chain is UDP-N-acetylglucosamine--N-acetylmuramyl-(pentapeptide) pyrophosphoryl-undecaprenol N-acetylglucosamine transferase from Borrelia garinii subsp. bavariensis (strain ATCC BAA-2496 / DSM 23469 / PBi) (Borreliella bavariensis).